Consider the following 79-residue polypeptide: Cell division protein ZapB (79 aa).

A coiled-coil region spans residues 4-78 (EVFEKLEAKV…LRALLGKMEE (75 aa)).

It belongs to the ZapB family. Homodimer. The ends of the coiled-coil dimer bind to each other, forming polymers. Interacts with FtsZ.

Its subcellular location is the cytoplasm. Non-essential, abundant cell division factor that is required for proper Z-ring formation. It is recruited early to the divisome by direct interaction with FtsZ, stimulating Z-ring assembly and thereby promoting cell division earlier in the cell cycle. Its recruitment to the Z-ring requires functional FtsA or ZipA. The chain is Cell division protein ZapB from Erwinia tasmaniensis (strain DSM 17950 / CFBP 7177 / CIP 109463 / NCPPB 4357 / Et1/99).